A 281-amino-acid chain; its full sequence is Small ribosomal subunit protein uS2 (281 aa).

A disordered region spans residues 233–281; the sequence is NKAEGEAAEQPMAAWEKELLTNEAPAEASAEAAAPAAAEGETAEAPKAE. Residues 255-275 are compositionally biased toward low complexity; sequence EAPAEASAEAAAPAAAEGETA.

Belongs to the universal ribosomal protein uS2 family.

In Bifidobacterium longum (strain DJO10A), this protein is Small ribosomal subunit protein uS2.